The chain runs to 470 residues: Cupincin (470 aa).

Residues 1-34 (MAKKKTSSSMARSQLAALLISLCFLSLASNAVGW) form the signal peptide. Residues 36-52 (RRGEREEEDERRRHGGE) show a composition bias toward basic and acidic residues. 2 disordered regions span residues 36–59 (RRGE…PYHL) and 240–261 (KSCS…PSSL). 2 consecutive Cupin type-1 domains span residues 57 to 215 (YHLG…EELE) and 259 to 445 (SSLT…AREA). N-linked (GlcNAc...) asparagine glycosylation is present at Asn297. Positions 330–368 (PHVSGGGSSERREREREHGRRREEEQGEEEHGERGEKAR) are disordered. The segment covering 338-367 (SERREREREHGRRREEEQGEEEHGERGEKA) has biased composition (basic and acidic residues). Residues His347, Glu352, and His360 each coordinate Zn(2+).

Belongs to the 7S seed storage protein family. In terms of assembly, homotrimer. Zn(2+) is required as a cofactor.

The protein resides in the secreted. Functionally, seed storage protein. Globulin-like protein that acts as a zinc metalloprotease. Cleaves specifically between Leu-15 and Tyr-16 of insulin B chain, and Gln-1 and Leu-2 of neurotensin (NT) peptide in vitro. May play a role as an initiating endopeptidase in germinating seeds. This Oryza sativa subsp. japonica (Rice) protein is Cupincin.